Reading from the N-terminus, the 356-residue chain is UDP-N-acetylglucosamine--N-acetylmuramyl-(pentapeptide) pyrophosphoryl-undecaprenol N-acetylglucosamine transferase (356 aa).

Residues 12-14 (TGG), asparagine 124, arginine 163, serine 188, isoleucine 242, and glutamine 287 contribute to the UDP-N-acetyl-alpha-D-glucosamine site.

The protein belongs to the glycosyltransferase 28 family. MurG subfamily.

It localises to the cell inner membrane. The enzyme catalyses di-trans,octa-cis-undecaprenyl diphospho-N-acetyl-alpha-D-muramoyl-L-alanyl-D-glutamyl-meso-2,6-diaminopimeloyl-D-alanyl-D-alanine + UDP-N-acetyl-alpha-D-glucosamine = di-trans,octa-cis-undecaprenyl diphospho-[N-acetyl-alpha-D-glucosaminyl-(1-&gt;4)]-N-acetyl-alpha-D-muramoyl-L-alanyl-D-glutamyl-meso-2,6-diaminopimeloyl-D-alanyl-D-alanine + UDP + H(+). It participates in cell wall biogenesis; peptidoglycan biosynthesis. Functionally, cell wall formation. Catalyzes the transfer of a GlcNAc subunit on undecaprenyl-pyrophosphoryl-MurNAc-pentapeptide (lipid intermediate I) to form undecaprenyl-pyrophosphoryl-MurNAc-(pentapeptide)GlcNAc (lipid intermediate II). The chain is UDP-N-acetylglucosamine--N-acetylmuramyl-(pentapeptide) pyrophosphoryl-undecaprenol N-acetylglucosamine transferase from Pseudomonas syringae pv. tomato (strain ATCC BAA-871 / DC3000).